The following is a 158-amino-acid chain: Transcription elongation factor GreA (158 aa).

Residues 1–26 adopt a coiled-coil conformation; it reads MNKVPLTEKGAQQLREELQELKTVVR.

It belongs to the GreA/GreB family.

Functionally, necessary for efficient RNA polymerase transcription elongation past template-encoded arresting sites. The arresting sites in DNA have the property of trapping a certain fraction of elongating RNA polymerases that pass through, resulting in locked ternary complexes. Cleavage of the nascent transcript by cleavage factors such as GreA or GreB allows the resumption of elongation from the new 3'terminus. GreA releases sequences of 2 to 3 nucleotides. The protein is Transcription elongation factor GreA of Nitrosococcus oceani (strain ATCC 19707 / BCRC 17464 / JCM 30415 / NCIMB 11848 / C-107).